A 580-amino-acid chain; its full sequence is Negative elongation factor B (580 aa).

The residue at position 519 (lysine 519) is an N6-acetyllysine. The interval 552 to 580 is disordered; the sequence is DHRKPSPTQAAETPALDLPLPSVPAPATL. Serine 557 carries the phosphoserine modification.

It belongs to the NELF-B family. As to quaternary structure, the NELF complex is composed of NELFA, NELFB, NELFCD and NELFE; the N-terminus of NELFB binds to the NELFA:NELFCD subcomplex. Binds RNA which may help to stabilize the NELF complex on nucleic acid Interacts with the first BRCT repeat of BRCA1. Interacts with KIAA1191. Isoform 1 and isoform 2 interact with NELFA, NELFCD and NELFE. Isoform 1 is expressed in the kidney, liver, adipose and lung. Isoform 2 is widely expressed.

The protein localises to the nucleus. Functionally, essential component of the NELF complex, a complex that negatively regulates the elongation of transcription by RNA polymerase II (Pol II). The NELF complex, which acts via an association with the DSIF complex and causes transcriptional pausing, is counteracted by the P-TEFb kinase complex. May be able to induce chromatin unfolding. Essential for early embryogenesis; plays an important role in maintaining the undifferentiated state of embryonic stem cells (ESCs) by preventing unscheduled expression of developmental genes. Plays a key role in establishing the responsiveness of stem cells to developmental cues; facilitates plasticity and cell fate commitment in ESCs by establishing the appropriate expression level of signaling molecules. Supports the transcription of genes involved in energy metabolism in cardiomyocytes; facilitates the association of transcription initiation factors with the promoters of the metabolism-related genes. The protein is Negative elongation factor B (Nelfb) of Mus musculus (Mouse).